Reading from the N-terminus, the 186-residue chain is Serine hydrolase RBBP9 (186 aa).

The segment at L63–E67 is involved in binding to RB1. Catalysis depends on charge relay system residues S75, D138, and H165.

Belongs to the RBBP9 family. As to quaternary structure, interacts with RB1; the interaction disrupts RB1 binding to E2F1. Interacts with RBL1 and RBL2. As to expression, highly expressed in the spleen, testis and kidney. Also found in the heart, liver, lung and brain.

The enzyme catalyses valacyclovir + H2O = acyclovir + L-valine + H(+). In terms of biological role, serine hydrolase. Catalyzes the hydrolytic activation of amino acid ester of the antiviral prodrug valacyclovir to its corresponding active drug, acyclovir. May negatively regulate basal or autocrine TGF-beta signaling by suppressing SMAD2-SMAD3 phosphorylation. May play a role in the transformation process due to its capacity to confer resistance to the growth-inhibitory effects of TGF-beta through interaction with RB1 and the subsequent displacement of E2F1. The chain is Serine hydrolase RBBP9 from Rattus norvegicus (Rat).